The chain runs to 405 residues: MQLNKVVLAYSGGLDTSVIIPWLKENFSCEVIAVVVDVGQEDDFETIKERAYKTGASKVYIEDAKAEFVKEYIFPTLKAGAVYEGKYLLGTSMARPLIAKRLVEIAKKENADAIAHGATGKGNDQVRFEVTIKALMPNIKIIAPWRMWNLKSREDELNYLAQKGIDIPFKKEESYSTDWNIWHLSHEGLELEDPWNMPNFEKVLMIIKNPFSLNDEPETIEIEFEKGVPIKINGKEMNCVELLKYLNKKGAEHGIGIVDIVENRLVGMKSRGVYETPGGTILHYAHRELEYLCLDRATLHFKEMVAIRFAELVYDGLWFSPLREALSAFVDKTQEVVNGTVKLVLYRGNIYSAGSKSPNSLYIKDLATFEEDQMYNQKDAEGFINLFGLPLKVFGMVNKKAGDSD.

9–17 (AYSGGLDTS) provides a ligand contact to ATP. The L-citrulline site is built by tyrosine 87 and serine 92. Glycine 117 contacts ATP. Residues threonine 119, asparagine 123, and aspartate 124 each coordinate L-aspartate. Asparagine 123 contributes to the L-citrulline binding site. Residues arginine 127, serine 176, serine 185, glutamate 262, and tyrosine 274 each contribute to the L-citrulline site.

Belongs to the argininosuccinate synthase family. Type 1 subfamily. Homotetramer.

It localises to the cytoplasm. The enzyme catalyses L-citrulline + L-aspartate + ATP = 2-(N(omega)-L-arginino)succinate + AMP + diphosphate + H(+). The protein operates within amino-acid biosynthesis; L-arginine biosynthesis; L-arginine from L-ornithine and carbamoyl phosphate: step 2/3. The sequence is that of Argininosuccinate synthase from Caldicellulosiruptor saccharolyticus (strain ATCC 43494 / DSM 8903 / Tp8T 6331).